Reading from the N-terminus, the 290-residue chain is ATP synthase gamma chain (290 aa).

It belongs to the ATPase gamma chain family. As to quaternary structure, F-type ATPases have 2 components, CF(1) - the catalytic core - and CF(0) - the membrane proton channel. CF(1) has five subunits: alpha(3), beta(3), gamma(1), delta(1), epsilon(1). CF(0) has three main subunits: a, b and c.

It is found in the cell inner membrane. In terms of biological role, produces ATP from ADP in the presence of a proton gradient across the membrane. The gamma chain is believed to be important in regulating ATPase activity and the flow of protons through the CF(0) complex. In Bacteroides fragilis (strain YCH46), this protein is ATP synthase gamma chain.